The primary structure comprises 337 residues: Lipoyl synthase (337 aa).

[4Fe-4S] cluster contacts are provided by Cys-81, Cys-86, Cys-92, Cys-107, Cys-111, Cys-114, and Ser-323. The Radical SAM core domain occupies 93–312 (FSHGTATFMI…EDYGNALGFS (220 aa)).

Belongs to the radical SAM superfamily. Lipoyl synthase family. It depends on [4Fe-4S] cluster as a cofactor.

It is found in the cytoplasm. The catalysed reaction is [[Fe-S] cluster scaffold protein carrying a second [4Fe-4S](2+) cluster] + N(6)-octanoyl-L-lysyl-[protein] + 2 oxidized [2Fe-2S]-[ferredoxin] + 2 S-adenosyl-L-methionine + 4 H(+) = [[Fe-S] cluster scaffold protein] + N(6)-[(R)-dihydrolipoyl]-L-lysyl-[protein] + 4 Fe(3+) + 2 hydrogen sulfide + 2 5'-deoxyadenosine + 2 L-methionine + 2 reduced [2Fe-2S]-[ferredoxin]. It functions in the pathway protein modification; protein lipoylation via endogenous pathway; protein N(6)-(lipoyl)lysine from octanoyl-[acyl-carrier-protein]: step 2/2. Its function is as follows. Catalyzes the radical-mediated insertion of two sulfur atoms into the C-6 and C-8 positions of the octanoyl moiety bound to the lipoyl domains of lipoate-dependent enzymes, thereby converting the octanoylated domains into lipoylated derivatives. This Xanthomonas euvesicatoria pv. vesicatoria (strain 85-10) (Xanthomonas campestris pv. vesicatoria) protein is Lipoyl synthase.